The sequence spans 173 residues: Translation initiation factor IF-3 (173 aa).

The protein belongs to the IF-3 family. In terms of assembly, monomer.

The protein resides in the cytoplasm. Its function is as follows. IF-3 binds to the 30S ribosomal subunit and shifts the equilibrium between 70S ribosomes and their 50S and 30S subunits in favor of the free subunits, thus enhancing the availability of 30S subunits on which protein synthesis initiation begins. This chain is Translation initiation factor IF-3, found in Bartonella bacilliformis (strain ATCC 35685 / KC583 / Herrer 020/F12,63).